The sequence spans 21 residues: QPSYDYDEEEDDRAKLRLDAR.

Q1 is modified (pyrrolidone carboxylic acid). Residues 1–11 (QPSYDYDEEED) show a composition bias toward acidic residues. Residues 1–21 (QPSYDYDEEEDDRAKLRLDAR) form a disordered region. The residue at position 6 (Y6) is a Sulfotyrosine. Residues 12-21 (DRAKLRLDAR) are compositionally biased toward basic and acidic residues.

In terms of assembly, heterohexamer; disulfide linked. Contains 2 sets of 3 non-identical chains (alpha, beta and gamma). The 2 heterotrimers are in head to head conformation with the N-termini in a small central domain. In terms of processing, conversion of fibrinogen to fibrin is triggered by thrombin, which cleaves fibrinopeptides A and B from alpha and beta chains, and thus exposes the N-terminal polymerization sites responsible for the formation of the soft clot.

The protein resides in the secreted. In terms of biological role, cleaved by the protease thrombin to yield monomers which, together with fibrinogen alpha (FGA) and fibrinogen gamma (FGG), polymerize to form an insoluble fibrin matrix. Fibrin has a major function in hemostasis as one of the primary components of blood clots. In addition, functions during the early stages of wound repair to stabilize the lesion and guide cell migration during re-epithelialization. Was originally thought to be essential for platelet aggregation, based on in vitro studies using anticoagulated blood. However subsequent studies have shown that it is not absolutely required for thrombus formation in vivo. Enhances expression of SELP in activated platelets. Maternal fibrinogen is essential for successful pregnancy. Fibrin deposition is also associated with infection, where it protects against IFNG-mediated hemorrhage. May also facilitate the antibacterial immune response via both innate and T-cell mediated pathways. The chain is Fibrinogen beta chain (FGB) from Antilocapra americana (Pronghorn).